Reading from the N-terminus, the 349-residue chain is uncharacterized protein (349 aa).

A helical membrane pass occupies residues 16 to 36 (LVITIISTGLIFGMTLVLTGL). Positions 111–139 (FGAPEHGPGMPRVSEGRSPSKPDEVAASS) are disordered. The segment covering 124–134 (SEGRSPSKPDE) has biased composition (basic and acidic residues). The next 3 helical transmembrane spans lie at 231–251 (ISIV…SVVY), 284–304 (VIAL…APLF), and 307–327 (IVAV…VIGL).

This sequence belongs to the ABC-4 integral membrane protein family. The complex is composed of two ATP-binding proteins (MT0079), two transmembrane proteins (MT0078) and a solute-binding protein.

It is found in the cell membrane. Its function is as follows. Probably part of an ABC transporter complex. Probably responsible for the translocation of the substrate across the membrane. This is an uncharacterized protein from Mycobacterium tuberculosis (strain CDC 1551 / Oshkosh).